The sequence spans 61 residues: uncharacterized protein (61 aa).

The interval 23-61 (VPTKWQDYKKPGPNQKYTSDGKKRRRIRRSQKSILGVRS) is disordered. A compositionally biased stretch (basic residues) spans 44-53 (KKRRRIRRSQ).

This is an uncharacterized protein from Archaeoglobus fulgidus (strain ATCC 49558 / DSM 4304 / JCM 9628 / NBRC 100126 / VC-16).